The sequence spans 299 residues: GDNF family receptor alpha-4 (299 aa).

Positions 1–20 (MVRCLGPALLLLLLLGSASS) are cleaved as a signal peptide. A disordered region spans residues 145–198 (RGLSPAHRPPAAQASPPGLSGLVHPSAQRPRRLPAGPGRPLPARLRGPRGVPAG). The span at 177 to 198 (LPAGPGRPLPARLRGPRGVPAG) shows a compositional bias: low complexity. N208 is a glycosylation site (N-linked (GlcNAc...) asparagine). The GPI-anchor amidated glycine moiety is linked to residue G278. Residues 279–299 (RALERRSLLSILPVLALPALL) constitute a propeptide, removed in mature form.

Belongs to the GDNFR family. As to quaternary structure, interacts with ARTN ligand and RET: forms a 2:2:2 ternary complex composed of ARTN ligand, GFRA3 and RET receptor. Interacts with SORL1. In terms of tissue distribution, predominantly expressed in the adult thyroid gland. Low levels also found in fetal adrenal and thyroid glands.

The protein localises to the cell membrane. It is found in the secreted. Its function is as follows. Receptor for persephin (PSPN), a growth factor that exhibits neurotrophic activity on mesencephalic dopaminergic and motor neurons. Acts by binding to its coreceptor, GFRA4, leading to autophosphorylation and activation of the RET receptor. May be important in C-cell development and, in the postnatal development of the adrenal medulla. The sequence is that of GDNF family receptor alpha-4 (GFRA4) from Homo sapiens (Human).